Here is a 457-residue protein sequence, read N- to C-terminus: uncharacterized protein (457 aa).

This is an uncharacterized protein from Synechocystis sp. (strain ATCC 27184 / PCC 6803 / Kazusa).